Consider the following 269-residue polypeptide: Fructose-2,6-bisphosphatase TIGAR (269 aa).

His11 serves as the catalytic Tele-phosphohistidine intermediate. Catalysis depends on Glu89, which acts as the Proton donor/acceptor.

It belongs to the phosphoglycerate mutase family. As to quaternary structure, interacts with HK2; the interaction increases hexokinase HK2 activity in a hypoxia- and HIF1A-dependent manner, resulting in the regulation of mitochondrial membrane potential, thus increasing NADPH production and decreasing intracellular ROS levels. As to expression, expressed in olfactory bulb, cerebellum, and cortex. Expressed in neurons and astrocytes (at protein level). Expressed in intestinal crypt.

It is found in the cytoplasm. The protein resides in the nucleus. Its subcellular location is the mitochondrion. It carries out the reaction beta-D-fructose 2,6-bisphosphate + H2O = beta-D-fructose 6-phosphate + phosphate. Functionally, fructose-bisphosphatase hydrolyzing fructose-2,6-bisphosphate as well as fructose-1,6-bisphosphate. Acts as a negative regulator of glycolysis by lowering intracellular levels of fructose-2,6-bisphosphate in a p53/TP53-dependent manner, resulting in the pentose phosphate pathway (PPP) activation and NADPH production. Contributes to the generation of reduced glutathione to cause a decrease in intracellular reactive oxygen species (ROS) content, correlating with its ability to protect cells from oxidative or metabolic stress-induced cell death. Plays a role in promoting protection against cell death during hypoxia by decreasing mitochondria ROS levels in a HK2-dependent manner through a mechanism that is independent of its fructose-bisphosphatase activity. In response to cardiac damage stress, mediates p53-induced inhibition of myocyte mitophagy through ROS levels reduction and the subsequent inactivation of BNIP3. Reduced mitophagy results in an enhanced apoptotic myocyte cell death, and exacerbates cardiac damage. Plays a role in adult intestinal regeneration; contributes to the growth, proliferation and survival of intestinal crypts following tissue ablation. Plays a neuroprotective role against ischemic brain damage by enhancing PPP flux and preserving mitochondria functions. Protects glioma cells from hypoxia- and ROS-induced cell death by inhibiting glycolysis and activating mitochondrial energy metabolism and oxygen consumption in a TKTL1-dependent and p53/TP53-independent manner. Plays a role in cancer cell survival by promoting DNA repair through activating PPP flux in a CDK5-ATM-dependent signaling pathway during hypoxia and/or genome stress-induced DNA damage responses. Involved in intestinal tumor progression. The sequence is that of Fructose-2,6-bisphosphatase TIGAR from Mus musculus (Mouse).